A 414-amino-acid chain; its full sequence is 3-phosphoshikimate 1-carboxyvinyltransferase (414 aa).

Residues Lys-20, Ser-21, and Arg-25 each contribute to the 3-phosphoshikimate site. Position 20 (Lys-20) interacts with phosphoenolpyruvate. Residues Gly-88 and Arg-116 each contribute to the phosphoenolpyruvate site. The 3-phosphoshikimate site is built by Thr-157, Ser-158, Gln-159, Ser-183, Asp-297, and Lys-324. Gln-159 provides a ligand contact to phosphoenolpyruvate. The Proton acceptor role is filled by Asp-297. 3 residues coordinate phosphoenolpyruvate: Arg-328, Arg-369, and Lys-395.

The protein belongs to the EPSP synthase family. Monomer.

It localises to the cytoplasm. The enzyme catalyses 3-phosphoshikimate + phosphoenolpyruvate = 5-O-(1-carboxyvinyl)-3-phosphoshikimate + phosphate. Its pathway is metabolic intermediate biosynthesis; chorismate biosynthesis. In terms of biological role, catalyzes the transfer of the enolpyruvyl moiety of phosphoenolpyruvate (PEP) to the 5-hydroxyl of shikimate-3-phosphate (S3P) to produce enolpyruvyl shikimate-3-phosphate and inorganic phosphate. This Caldivirga maquilingensis (strain ATCC 700844 / DSM 13496 / JCM 10307 / IC-167) protein is 3-phosphoshikimate 1-carboxyvinyltransferase.